A 429-amino-acid chain; its full sequence is GTPase Obg (429 aa).

The Obg domain occupies 1–158 (MFVDQVKIYV…RNVQLELKVL (158 aa)). The interval 124–145 (RGNKRFATPANPAPELSENGEP) is disordered. An OBG-type G domain is found at 159 to 329 (ADVGLVGFPS…LLLAIADKLE (171 aa)). GTP-binding positions include 165 to 172 (GFPSVGKS), 190 to 194 (FTTIV), 212 to 215 (DLPG), 282 to 285 (NKMD), and 310 to 312 (SAV). The Mg(2+) site is built by serine 172 and threonine 192. One can recognise an OCT domain in the interval 351–429 (KYVAEEPDFE…LLDYEFEFMD (79 aa)).

This sequence belongs to the TRAFAC class OBG-HflX-like GTPase superfamily. OBG GTPase family. Monomer. The cofactor is Mg(2+).

Its subcellular location is the cytoplasm. An essential GTPase which binds GTP, GDP and possibly (p)ppGpp with moderate affinity, with high nucleotide exchange rates and a fairly low GTP hydrolysis rate. Plays a role in control of the cell cycle, stress response, ribosome biogenesis and in those bacteria that undergo differentiation, in morphogenesis control. The protein is GTPase Obg of Listeria monocytogenes serotype 4b (strain F2365).